The following is a 700-amino-acid chain: Elongation factor G (700 aa).

The tr-type G domain maps to 10-286; it reads SKVRNIGIMA…AVIDYLPSPL (277 aa). GTP is bound by residues 19–26, 83–87, and 137–140; these read AHIDAGKT, DTPGH, and NKMD.

This sequence belongs to the TRAFAC class translation factor GTPase superfamily. Classic translation factor GTPase family. EF-G/EF-2 subfamily.

Its subcellular location is the cytoplasm. Catalyzes the GTP-dependent ribosomal translocation step during translation elongation. During this step, the ribosome changes from the pre-translocational (PRE) to the post-translocational (POST) state as the newly formed A-site-bound peptidyl-tRNA and P-site-bound deacylated tRNA move to the P and E sites, respectively. Catalyzes the coordinated movement of the two tRNA molecules, the mRNA and conformational changes in the ribosome. The polypeptide is Elongation factor G (Mycolicibacterium gilvum (strain PYR-GCK) (Mycobacterium gilvum (strain PYR-GCK))).